The chain runs to 1346 residues: G-protein coupled receptor-associated sorting protein 1 (1346 aa).

3 disordered regions span residues 1 to 101 (MTGA…FRGE), 144 to 177 (TESI…RPRP), and 192 to 258 (ADKS…SAKT). Residues 21-36 (ENANAAEVEPEVPLVV) show a composition bias toward low complexity. The span at 211–226 (FRPRKSMKSNTRFRHM) shows a compositional bias: basic residues. Ser295 carries the post-translational modification Phosphoserine. 2 disordered regions span residues 311–399 (EEAK…RPEE) and 461–485 (VSSF…SKSM). Basic residues predominate over residues 316–333 (RSKPRARKGVNMRARHQA). Basic and acidic residues-rich tracts occupy residues 347–361 (DKNK…EEKA) and 370–399 (KKEP…RPEE). Polar residues predominate over residues 461 to 484 (VSSFCLGSGKKTSMESGPKATSKS). Phosphoserine is present on residues Ser619 and Ser626. Thr860 carries the phosphothreonine modification. Ser862 carries the post-translational modification Phosphoserine. The disordered stretch occupies residues 984–1004 (ACEPESSTEHEPDPSRRPQSW). Positions 990-1003 (STEHEPDPSRRPQS) are enriched in basic and acidic residues.

Belongs to the GPRASP family. As to quaternary structure, interacts with cytoplasmic tails of a variety of G-protein coupled receptors such as delta opioid receptor/OPRD1, beta-2 adrenergic receptor/ADRB2 and D4 dopamine receptor/DRD4. Interacts with BECN2; the interaction is direct and with D2 dopamine receptor/DRD2. Interacts with PER1. In terms of tissue distribution, expressed in the brain.

It localises to the cytoplasm. Functionally, modulates lysosomal sorting and functional down-regulation of a variety of G-protein coupled receptors. Targets receptors for degradation in lysosomes via its interaction with BECN2. In Rattus norvegicus (Rat), this protein is G-protein coupled receptor-associated sorting protein 1 (Gprasp1).